A 392-amino-acid polypeptide reads, in one-letter code: Chorismate synthase (392 aa).

Residues Arg40 and Arg46 each contribute to the NADP(+) site. FMN contacts are provided by residues 129–131 (RSS), 257–258 (QA), Gly302, 317–321 (KPIAT), and Arg343.

It belongs to the chorismate synthase family. In terms of assembly, homotetramer. The cofactor is FMNH2.

The catalysed reaction is 5-O-(1-carboxyvinyl)-3-phosphoshikimate = chorismate + phosphate. It participates in metabolic intermediate biosynthesis; chorismate biosynthesis; chorismate from D-erythrose 4-phosphate and phosphoenolpyruvate: step 7/7. In terms of biological role, catalyzes the anti-1,4-elimination of the C-3 phosphate and the C-6 proR hydrogen from 5-enolpyruvylshikimate-3-phosphate (EPSP) to yield chorismate, which is the branch point compound that serves as the starting substrate for the three terminal pathways of aromatic amino acid biosynthesis. This reaction introduces a second double bond into the aromatic ring system. This Chloroherpeton thalassium (strain ATCC 35110 / GB-78) protein is Chorismate synthase.